The primary structure comprises 269 residues: MPMETGFTSPGPLIVQIGGFAVRWYSLLILAGIIAGTLLSQKLAPERKVAPEVLSDLVVWLVVGAIPMARLYYVLFEWQRFAGEPWWKVFAIWEGGIAIHGAILGGLLAGWLFCRRNGYSLLTMIDLAAPGLILGQAIGRWGNFFNSEAYGAPTNLPWKLFIPEANRPPGMAAFAYYHPTFLYESLWNLGVLALLLFVFFRFKNLRPGSIACLYALAYSVGRFWIEGLRLDSLMVGPLRTAQLVSLAGIVLGAVGLWWLNRRSARQEAP.

4 helical membrane-spanning segments follow: residues 14–34 (IVQIGGFAVRWYSLLILAGII), 49–69 (VAPEVLSDLVVWLVVGAIPMA), 89–109 (VFAIWEGGIAIHGAILGGLLA), and 118–138 (GYSLLTMIDLAAPGLILGQAI). A 1,2-diacyl-sn-glycero-3-phospho-(1'-sn-glycerol) is bound at residue arginine 140. The next 3 membrane-spanning stretches (helical) occupy residues 180–200 (TFLYESLWNLGVLALLLFVFF), 208–228 (GSIACLYALAYSVGRFWIEGL), and 240–260 (TAQLVSLAGIVLGAVGLWWLN).

Belongs to the Lgt family.

It is found in the cell inner membrane. The catalysed reaction is L-cysteinyl-[prolipoprotein] + a 1,2-diacyl-sn-glycero-3-phospho-(1'-sn-glycerol) = an S-1,2-diacyl-sn-glyceryl-L-cysteinyl-[prolipoprotein] + sn-glycerol 1-phosphate + H(+). Its pathway is protein modification; lipoprotein biosynthesis (diacylglyceryl transfer). Functionally, catalyzes the transfer of the diacylglyceryl group from phosphatidylglycerol to the sulfhydryl group of the N-terminal cysteine of a prolipoprotein, the first step in the formation of mature lipoproteins. The sequence is that of Phosphatidylglycerol--prolipoprotein diacylglyceryl transferase from Gloeobacter violaceus (strain ATCC 29082 / PCC 7421).